The primary structure comprises 307 residues: Methionyl-tRNA formyltransferase (307 aa).

Residue 108–111 participates in (6S)-5,6,7,8-tetrahydrofolate binding; sequence SLLP.

It belongs to the Fmt family.

The catalysed reaction is L-methionyl-tRNA(fMet) + (6R)-10-formyltetrahydrofolate = N-formyl-L-methionyl-tRNA(fMet) + (6S)-5,6,7,8-tetrahydrofolate + H(+). Functionally, attaches a formyl group to the free amino group of methionyl-tRNA(fMet). The formyl group appears to play a dual role in the initiator identity of N-formylmethionyl-tRNA by promoting its recognition by IF2 and preventing the misappropriation of this tRNA by the elongation apparatus. The protein is Methionyl-tRNA formyltransferase of Xanthomonas oryzae pv. oryzae (strain MAFF 311018).